A 245-amino-acid chain; its full sequence is Large ribosomal subunit protein uL3 (245 aa).

An N5-methylglutamine modification is found at glutamine 151. The tract at residues 214–245 (KDAPQPGKYRLANSAAPQPAEADAASDTGAQA) is disordered. The span at 225 to 245 (ANSAAPQPAEADAASDTGAQA) shows a compositional bias: low complexity.

This sequence belongs to the universal ribosomal protein uL3 family. In terms of assembly, part of the 50S ribosomal subunit. Forms a cluster with proteins L14 and L19. In terms of processing, methylated by PrmB.

Functionally, one of the primary rRNA binding proteins, it binds directly near the 3'-end of the 23S rRNA, where it nucleates assembly of the 50S subunit. The polypeptide is Large ribosomal subunit protein uL3 (Methylocella silvestris (strain DSM 15510 / CIP 108128 / LMG 27833 / NCIMB 13906 / BL2)).